A 481-amino-acid polypeptide reads, in one-letter code: MSAQVPTAGRIIQVLGPVVDVEFPPGGLPEVYTALKVTNANLSAAADNLTLEVAQHLGENTVRTIAMDSTEGLGRGMAVTNTGAPIQVPVGKATLGRILNVTGEPVDEMGPVKAQEYWSIHRAPPPFTEQDVRVQMFETGIKVIDLLAPYTRGGKIGLFGGAGVGKTVLLQELIRNVAVERGGFSVFAGVGERTREGNDLYHEMQDTKVIQTDNLEASQAVLVYGQMNEPPGARARVALSALTMAEYFRDVEGRDVLLFVDNIFRFTQAGSEVSALLGRIPSAVGYQPTLATEMGGLQERITSTTKGSITSVQAIYVPADDLTDPAPATAFAHLDATTVLNRSIAELAIFPAVDPLDSTSRILDPAVIGAEHYGVARKVQGILQRYKELQDIIAILGMDELSEDDKLVVARARKIQRFLSQPFFVAKVFTGKDGRYVKLQDTIQGFKEIAEGKHDDIPEGAFYMTGSIDEVVENARKLAAS.

Residue 160 to 167 (GGAGVGKT) participates in ATP binding.

This sequence belongs to the ATPase alpha/beta chains family. In terms of assembly, F-type ATPases have 2 components, CF(1) - the catalytic core - and CF(0) - the membrane proton channel. CF(1) has five subunits: alpha(3), beta(3), gamma(1), delta(1), epsilon(1). CF(0) has three main subunits: a(1), b(2) and c(9-12). The alpha and beta chains form an alternating ring which encloses part of the gamma chain. CF(1) is attached to CF(0) by a central stalk formed by the gamma and epsilon chains, while a peripheral stalk is formed by the delta and b chains.

The protein localises to the cell inner membrane. It catalyses the reaction ATP + H2O + 4 H(+)(in) = ADP + phosphate + 5 H(+)(out). Functionally, produces ATP from ADP in the presence of a proton gradient across the membrane. The catalytic sites are hosted primarily by the beta subunits. This chain is ATP synthase subunit beta, found in Myxococcus xanthus (strain DK1622).